The primary structure comprises 152 residues: Ribosome maturation factor RimP (152 aa).

Belongs to the RimP family.

The protein resides in the cytoplasm. Functionally, required for maturation of 30S ribosomal subunits. This Escherichia coli (strain K12 / MC4100 / BW2952) protein is Ribosome maturation factor RimP.